A 305-amino-acid chain; its full sequence is Aspartate carbamoyltransferase catalytic subunit (305 aa).

2 residues coordinate carbamoyl phosphate: arginine 54 and threonine 55. An L-aspartate-binding site is contributed by lysine 82. Positions 104, 132, and 135 each coordinate carbamoyl phosphate. L-aspartate is bound by residues arginine 165 and arginine 218. Positions 259 and 260 each coordinate carbamoyl phosphate.

Belongs to the aspartate/ornithine carbamoyltransferase superfamily. ATCase family. Heterododecamer (2C3:3R2) of six catalytic PyrB chains organized as two trimers (C3), and six regulatory PyrI chains organized as three dimers (R2).

The catalysed reaction is carbamoyl phosphate + L-aspartate = N-carbamoyl-L-aspartate + phosphate + H(+). It participates in pyrimidine metabolism; UMP biosynthesis via de novo pathway; (S)-dihydroorotate from bicarbonate: step 2/3. Catalyzes the condensation of carbamoyl phosphate and aspartate to form carbamoyl aspartate and inorganic phosphate, the committed step in the de novo pyrimidine nucleotide biosynthesis pathway. The polypeptide is Aspartate carbamoyltransferase catalytic subunit (Caldicellulosiruptor bescii (strain ATCC BAA-1888 / DSM 6725 / KCTC 15123 / Z-1320) (Anaerocellum thermophilum)).